Reading from the N-terminus, the 418-residue chain is Gamma-glutamyl phosphate reductase (418 aa).

It belongs to the gamma-glutamyl phosphate reductase family.

It is found in the cytoplasm. The enzyme catalyses L-glutamate 5-semialdehyde + phosphate + NADP(+) = L-glutamyl 5-phosphate + NADPH + H(+). Its pathway is amino-acid biosynthesis; L-proline biosynthesis; L-glutamate 5-semialdehyde from L-glutamate: step 2/2. Catalyzes the NADPH-dependent reduction of L-glutamate 5-phosphate into L-glutamate 5-semialdehyde and phosphate. The product spontaneously undergoes cyclization to form 1-pyrroline-5-carboxylate. The polypeptide is Gamma-glutamyl phosphate reductase (Teredinibacter turnerae (strain ATCC 39867 / T7901)).